A 330-amino-acid chain; its full sequence is MKKQFIQKQQQISFVKSFFSRQLEQQLGLIEVQAPILSRVGDGTQDNLSGSEKAVQVKVKSLPDSTFEVVHSLAKWKRKTLGRFDFGADQGVYTHMKALRPDEDRLSAIHSVYVDQWDWERVMGDGERNLAYLKSTVNKIYAAIKETEAAISAEFGVKPFLPDHIQFIHSESLRARFPDLDAKGRERAIAKELGAVFLIGIGGKLADGQSHDVRAPDYDDWTSPSAEGFSGLNGDIIVWNPILEDAFEISSMGIRVDAEALKRQLALTGDEDRLELEWHQSLLRGEMPQTIGGGIGQSRLVMLLLQKQHIGQVQCGVWGPEISEKVDGLL.

This sequence belongs to the class-II aminoacyl-tRNA synthetase family. AsnA subfamily.

It is found in the cytoplasm. It catalyses the reaction L-aspartate + NH4(+) + ATP = L-asparagine + AMP + diphosphate + H(+). It participates in amino-acid biosynthesis; L-asparagine biosynthesis; L-asparagine from L-aspartate (ammonia route): step 1/1. This is Aspartate--ammonia ligase from Yersinia pseudotuberculosis serotype O:1b (strain IP 31758).